A 514-amino-acid polypeptide reads, in one-letter code: 1,25-dihydroxyvitamin D(3) 24-hydroxylase, mitochondrial (514 aa).

Residues 1–35 (MSCPIDKRRPLIAFLRRLRDLGQPPRSVTSKAHVK) constitute a mitochondrion transit peptide. Cysteine 462 contacts heme.

The protein belongs to the cytochrome P450 family. Heme is required as a cofactor.

It is found in the mitochondrion. It carries out the reaction calcitriol + 2 reduced [adrenodoxin] + O2 + 2 H(+) = calcitetrol + 2 oxidized [adrenodoxin] + H2O. The enzyme catalyses calcitetrol + 2 reduced [adrenodoxin] + O2 + 2 H(+) = (1S)-1,25-dihydroxy-24-oxocalciol + 2 oxidized [adrenodoxin] + 2 H2O. The catalysed reaction is (1S)-1,25-dihydroxy-24-oxocalciol + 2 reduced [adrenodoxin] + O2 + 2 H(+) = (1S)-1,23,25-trihydroxy-24-oxocalciol + 2 oxidized [adrenodoxin] + H2O. It catalyses the reaction (1S)-1,23-dihydroxy-24,25,26,27-tetranorcalciol + 2 reduced [adrenodoxin] + O2 + 2 H(+) = (1S)-1-hydroxy-23-oxo-24,25,26,27-tetranorcalciol + 2 oxidized [adrenodoxin] + 2 H2O. It carries out the reaction (1S)-1-hydroxy-23-oxo-24,25,26,27-tetranorcalciol + 2 reduced [adrenodoxin] + O2 + H(+) = calcitroate + 2 oxidized [adrenodoxin] + H2O. The enzyme catalyses calcidiol + 2 reduced [adrenodoxin] + O2 + 2 H(+) = secalciferol + 2 oxidized [adrenodoxin] + H2O. The catalysed reaction is secalciferol + 2 reduced [adrenodoxin] + O2 + 2 H(+) = 25-hydroxy-24-oxocalciol + 2 oxidized [adrenodoxin] + 2 H2O. It catalyses the reaction 25-hydroxy-24-oxocalciol + 2 reduced [adrenodoxin] + O2 + 2 H(+) = 23S,25-dihydroxy-24-oxocholecalciferol + 2 oxidized [adrenodoxin] + H2O. It carries out the reaction 20S,23-dihydroxycholecalciferol + 2 reduced [adrenodoxin] + O2 + 2 H(+) = 20S,23,25-trihydroxycholecalciferol + 2 oxidized [adrenodoxin] + H2O. The enzyme catalyses 20S,23-dihydroxycholecalciferol + 2 reduced [adrenodoxin] + O2 + 2 H(+) = 20S,23,24-trihydroxycholecalciferol + 2 oxidized [adrenodoxin] + H2O. The catalysed reaction is 20S-hydroxycholecalciferol + 2 reduced [adrenodoxin] + O2 + 2 H(+) = 20S,25-dihydroxycholecalciferol + 2 oxidized [adrenodoxin] + H2O. It catalyses the reaction 20S-hydroxycholecalciferol + 2 reduced [adrenodoxin] + O2 + 2 H(+) = 20S,24S-dihydroxycholecalciferol + 2 oxidized [adrenodoxin] + H2O. It carries out the reaction 20S-hydroxycholecalciferol + 2 reduced [adrenodoxin] + O2 + 2 H(+) = 20S,24R-dihydroxycholecalciferol + 2 oxidized [adrenodoxin] + H2O. Its function is as follows. A cytochrome P450 monooxygenase with a key role in vitamin D catabolism and calcium homeostasis. Via C24-oxidation pathway, catalyzes the inactivation of both the vitamin D precursor calcidiol (25-hydroxyvitamin D(3)) and the active hormone calcitriol (1-alpha,25-dihydroxyvitamin D(3)). With initial hydroxylation at C-24 (via C24-oxidation pathway), performs a sequential 6-step oxidation of calcitriol leading to the formation of the biliary metabolite calcitroic acid. Hydroxylates at C-24 or C-25 other vitamin D active metabolites, such as CYP11A1-derived secosteroids 20S-hydroxycholecalciferol and 20S,23-dihydroxycholecalciferol. Mechanistically, uses molecular oxygen inserting one oxygen atom into a substrate, and reducing the second into a water molecule, with two electrons provided by NADPH via FDXR/adrenodoxin reductase and FDX1/adrenodoxin. This is 1,25-dihydroxyvitamin D(3) 24-hydroxylase, mitochondrial from Mus musculus (Mouse).